The following is a 438-amino-acid chain: 3-phosphoshikimate 1-carboxyvinyltransferase (438 aa).

Residues K28, S29, and R33 each coordinate 3-phosphoshikimate. Residue K28 coordinates phosphoenolpyruvate. Residues G97 and R125 each contribute to the phosphoenolpyruvate site. Residues S168, S169, Q170, E316, and H343 each coordinate 3-phosphoshikimate. Residue Q170 participates in phosphoenolpyruvate binding. Residue E316 is the Proton acceptor of the active site. Phosphoenolpyruvate contacts are provided by R347, R388, and K413.

It belongs to the EPSP synthase family. In terms of assembly, monomer.

The protein resides in the cytoplasm. The catalysed reaction is 3-phosphoshikimate + phosphoenolpyruvate = 5-O-(1-carboxyvinyl)-3-phosphoshikimate + phosphate. The protein operates within metabolic intermediate biosynthesis; chorismate biosynthesis; chorismate from D-erythrose 4-phosphate and phosphoenolpyruvate: step 6/7. Functionally, catalyzes the transfer of the enolpyruvyl moiety of phosphoenolpyruvate (PEP) to the 5-hydroxyl of shikimate-3-phosphate (S3P) to produce enolpyruvyl shikimate-3-phosphate and inorganic phosphate. This is 3-phosphoshikimate 1-carboxyvinyltransferase from Rhodococcus jostii (strain RHA1).